The primary structure comprises 189 residues: 3-hydroxyanthranilate 3,4-dioxygenase (189 aa).

R46 contributes to the O2 binding site. Fe cation contacts are provided by H50, E56, and H94. E56 is a binding site for substrate. Positions 98 and 109 each coordinate substrate. Fe cation is bound by residues C124, C127, C161, and C164.

The protein belongs to the 3-HAO family. Homodimer. Requires Fe(2+) as cofactor.

The enzyme catalyses 3-hydroxyanthranilate + O2 = (2Z,4Z)-2-amino-3-carboxymuconate 6-semialdehyde. The protein operates within cofactor biosynthesis; NAD(+) biosynthesis; quinolinate from L-kynurenine: step 3/3. In terms of biological role, catalyzes the oxidative ring opening of 3-hydroxyanthranilate to 2-amino-3-carboxymuconate semialdehyde, which spontaneously cyclizes to quinolinate. In Shewanella woodyi (strain ATCC 51908 / MS32), this protein is 3-hydroxyanthranilate 3,4-dioxygenase.